The chain runs to 84 residues: Small ribosomal subunit protein eS27 (84 aa).

The segment covering 1 to 16 has biased composition (basic and acidic residues); that stretch reads MPLAKDLLHPSPEEEK. Residues 1-23 form a disordered region; it reads MPLAKDLLHPSPEEEKRKHKKKR. A Phosphoserine modification is found at S11. The C4-type zinc-finger motif lies at 38 to 60; that stretch reads PGCYKITTVFSHAQTVVLCVGCS.

The protein belongs to the eukaryotic ribosomal protein eS27 family. In terms of assembly, component of the small ribosomal subunit. Part of the small subunit (SSU) processome, composed of more than 70 proteins and the RNA chaperone small nucleolar RNA (snoRNA) U3. Zn(2+) serves as cofactor.

It is found in the cytoplasm. Its subcellular location is the nucleus. The protein localises to the nucleolus. In terms of biological role, component of the small ribosomal subunit. The ribosome is a large ribonucleoprotein complex responsible for the synthesis of proteins in the cell. Required for proper rRNA processing and maturation of 18S rRNAs. Part of the small subunit (SSU) processome, first precursor of the small eukaryotic ribosomal subunit. During the assembly of the SSU processome in the nucleolus, many ribosome biogenesis factors, an RNA chaperone and ribosomal proteins associate with the nascent pre-rRNA and work in concert to generate RNA folding, modifications, rearrangements and cleavage as well as targeted degradation of pre-ribosomal RNA by the RNA exosome. The sequence is that of Small ribosomal subunit protein eS27 from Mus musculus (Mouse).